Consider the following 206-residue polypeptide: Uridine kinase (206 aa).

ATP is bound at residue 11 to 18 (GGTGSGKS).

It belongs to the uridine kinase family.

It localises to the cytoplasm. It carries out the reaction uridine + ATP = UMP + ADP + H(+). The enzyme catalyses cytidine + ATP = CMP + ADP + H(+). It functions in the pathway pyrimidine metabolism; CTP biosynthesis via salvage pathway; CTP from cytidine: step 1/3. The protein operates within pyrimidine metabolism; UMP biosynthesis via salvage pathway; UMP from uridine: step 1/1. In Clostridium botulinum (strain Okra / Type B1), this protein is Uridine kinase.